A 357-amino-acid chain; its full sequence is Histidinol-phosphate aminotransferase 2 (357 aa).

An N6-(pyridoxal phosphate)lysine modification is found at lysine 215.

It belongs to the class-II pyridoxal-phosphate-dependent aminotransferase family. Histidinol-phosphate aminotransferase subfamily. Homodimer. It depends on pyridoxal 5'-phosphate as a cofactor.

It catalyses the reaction L-histidinol phosphate + 2-oxoglutarate = 3-(imidazol-4-yl)-2-oxopropyl phosphate + L-glutamate. It participates in amino-acid biosynthesis; L-histidine biosynthesis; L-histidine from 5-phospho-alpha-D-ribose 1-diphosphate: step 7/9. This Thiobacillus denitrificans (strain ATCC 25259 / T1) protein is Histidinol-phosphate aminotransferase 2.